The following is a 748-amino-acid chain: Histone-lysine N-methyltransferase EZH2 (748 aa).

A compositionally biased stretch (acidic residues) spans 183 to 199 (DYEDDEDGEDNQDDERD). 2 disordered regions span residues 183-215 (DYEDDEDGEDNQDDERDDITKDQDDNMEEKETL) and 347-428 (TPPK…NIEP). Positions 200-215 (DITKDQDDNMEEKETL) are enriched in basic and acidic residues. Over residues 348–359 (PPKRPSGRRRGR) the composition is skewed to basic residues. The segment covering 376 to 387 (EAKDTDSDREAG) has biased composition (basic and acidic residues). The CXC domain occupies 505–607 (CRKIQLKKDG…SKNVSCKNCS (103 aa)). The region spanning 614–729 (KHLLLAPSDV…TGEELFFDYR (116 aa)) is the SET domain.

The protein belongs to the class V-like SAM-binding methyltransferase superfamily. Histone-lysine methyltransferase family. EZ subfamily. In terms of assembly, component of the prc2/eed-ezh2 complex.

The protein localises to the nucleus. It carries out the reaction L-lysyl(27)-[histone H3] + 3 S-adenosyl-L-methionine = N(6),N(6),N(6)-trimethyl-L-lysyl(27)-[histone H3] + 3 S-adenosyl-L-homocysteine + 3 H(+). In terms of biological role, polycomb group (PcG) protein. Catalytic subunit of the prc2/eed-ezh2 complex, which methylates 'Lys-9' and 'Lys-27' of histone H3, leading to transcriptional repression of the affected target gene. May regulate the circadian clock via histone methylation at the promoter of the circadian genes. This is Histone-lysine N-methyltransferase EZH2 (ezh2-b) from Xenopus laevis (African clawed frog).